We begin with the raw amino-acid sequence, 175 residues long: Peptide deformylase (175 aa).

Fe cation is bound by residues Cys-98 and His-140. The active site involves Glu-141. A Fe cation-binding site is contributed by His-144.

The protein belongs to the polypeptide deformylase family. The cofactor is Fe(2+).

It catalyses the reaction N-terminal N-formyl-L-methionyl-[peptide] + H2O = N-terminal L-methionyl-[peptide] + formate. In terms of biological role, removes the formyl group from the N-terminal Met of newly synthesized proteins. Requires at least a dipeptide for an efficient rate of reaction. N-terminal L-methionine is a prerequisite for activity but the enzyme has broad specificity at other positions. In Bradyrhizobium sp. (strain ORS 278), this protein is Peptide deformylase.